The primary structure comprises 756 residues: Virulence factor MDV010 (756 aa).

Positions Met1–Leu30 are cleaved as a signal peptide. Residues Glu96–Ser120 are disordered. Positions Thr100–Glu113 are enriched in polar residues. 12 N-linked (GlcNAc...) asparagine; by host glycosylation sites follow: Asn222, Asn241, Asn287, Asn423, Asn495, Asn542, Asn552, Asn580, Asn660, Asn684, Asn715, and Asn744.

Its subcellular location is the secreted. In terms of biological role, may play a role in host immune modulation since the protein is secreted and provides an advantage for growth in vivo while it is completely dispensable in cell culture. The protein is Virulence factor MDV010 (MDV010) of Gallid herpesvirus 2 (strain Chicken/Md5/ATCC VR-987) (GaHV-2).